The primary structure comprises 74 residues: UPF0346 protein SE_1114 (74 aa).

The protein belongs to the UPF0346 family.

The sequence is that of UPF0346 protein SE_1114 from Staphylococcus epidermidis (strain ATCC 12228 / FDA PCI 1200).